The primary structure comprises 219 residues: Transmembrane protein 179B (219 aa).

4 helical membrane passes run 9-29, 65-85, 98-118, and 162-182; these read VELL…ATLT, FVAG…FFWV, IGLR…LVSA, and LHTA…ALLL. Ser206 bears the Phosphoserine mark.

This sequence belongs to the TMEM179 family.

The protein resides in the membrane. The sequence is that of Transmembrane protein 179B (Tmem179b) from Mus musculus (Mouse).